The following is a 419-amino-acid chain: S-adenosylmethionine synthase (419 aa).

His15 serves as a coordination point for ATP. Asp17 lines the Mg(2+) pocket. K(+) is bound at residue Glu43. Residues Glu56 and Gln100 each contribute to the L-methionine site. Residues 100 to 110 (QSPDIAQGVDE) form a flexible loop region. Residues 171–173 (DGK), 248–249 (KF), Asp257, 263–264 (RK), Ala280, and Lys284 each bind ATP. Asp257 lines the L-methionine pocket. Lys288 lines the L-methionine pocket.

This sequence belongs to the AdoMet synthase family. Homotetramer; dimer of dimers. Requires Mg(2+) as cofactor. K(+) serves as cofactor.

Its subcellular location is the cytoplasm. The catalysed reaction is L-methionine + ATP + H2O = S-adenosyl-L-methionine + phosphate + diphosphate. It functions in the pathway amino-acid biosynthesis; S-adenosyl-L-methionine biosynthesis; S-adenosyl-L-methionine from L-methionine: step 1/1. Catalyzes the formation of S-adenosylmethionine (AdoMet) from methionine and ATP. The overall synthetic reaction is composed of two sequential steps, AdoMet formation and the subsequent tripolyphosphate hydrolysis which occurs prior to release of AdoMet from the enzyme. The polypeptide is S-adenosylmethionine synthase (Synechococcus sp. (strain WH7803)).